Reading from the N-terminus, the 195-residue chain is Probable GTP-binding protein EngB (195 aa).

An EngB-type G domain is found at 22-195 (GLPEIALAGR…WGAIKKMISR (174 aa)). GTP-binding positions include 30 to 37 (GRSNVGKS), 57 to 61 (GKTQT), 75 to 78 (DVPG), 142 to 145 (TKAD), and 174 to 176 (FSS). Residues serine 37 and threonine 59 each contribute to the Mg(2+) site.

Belongs to the TRAFAC class TrmE-Era-EngA-EngB-Septin-like GTPase superfamily. EngB GTPase family. Requires Mg(2+) as cofactor.

In terms of biological role, necessary for normal cell division and for the maintenance of normal septation. The protein is Probable GTP-binding protein EngB of Bacillus velezensis (strain DSM 23117 / BGSC 10A6 / LMG 26770 / FZB42) (Bacillus amyloliquefaciens subsp. plantarum).